We begin with the raw amino-acid sequence, 333 residues long: PDZ domain-containing protein GIPC1 (333 aa).

The segment covering 1–11 (MPLGLGRRKKA) has biased composition (basic residues). Positions 1 to 53 (MPLGLGRRKKAPPLVENEEAEPSRSGLGVGEPGPLGGSAAGESQMGLPPPPAA) are disordered. The span at 27-39 (LGVGEPGPLGGSA) shows a compositional bias: gly residues. Residue Ser68 is modified to Phosphoserine. Residues 133–213 (EVEVFKSEEA…GRTFTLKLTE (81 aa)) enclose the PDZ domain. Ser222, Ser225, and Ser232 each carry phosphoserine. Positions 223 to 244 (QRSAGGHPGSGPQLGTGRGTLR) are disordered. Over residues 228–240 (GHPGSGPQLGTGR) the composition is skewed to gly residues. Thr242 bears the Phosphothreonine mark. Ser247 is subject to Phosphoserine.

This sequence belongs to the GIPC family. In terms of assembly, interacts with GLUT1 (C-terminus), ACTN1, KIF1B, MYO6 and PLEKHG5. Interacts with RGS19 C-terminus. Interacts with SDC4/syndecan-4 and SEMA4C/semaphorin-4C. As to expression, widely expressed.

It localises to the cytoplasm. The protein localises to the membrane. Inhibits endothelial cell migration (in vitro). May be involved in G protein-linked signaling. The chain is PDZ domain-containing protein GIPC1 (Gipc1) from Mus musculus (Mouse).